The following is a 308-amino-acid chain: MHIERLAVDESVGRAMPPQRFIEALSDLGVPVEFAGEDEQFGPGDAVASFGHRDAFLDADWVHCIRAGYDEFPVGVYEEAGTYLTNSTGIHGTTVGETVAGYMLTFARRLHAYRDAQHDHAWDLPRYEEPFTLAGERVCVVGLGTLGRGVVDRAAALGMEVVGVRRSGDPVDNVSTVYTPDRLHEAIADARFVVLATPLTDETEGMVAAPEFETMREDASLVNVARGPVVVESDLVAALDSGDIAGAALDVFSEEPLPEDSPLWDFEDVLITPHVSAATSKYHEDVAALIRENIEKIATGDELTNRVV.

NAD(+)-binding positions include 145–146, 224–226, and Asp250; these read TL and VAR. Arg226 is a catalytic residue. Glu255 is a catalytic residue. Catalysis depends on His274, which acts as the Proton donor. Residue 274–277 participates in NAD(+) binding; sequence HVSA.

Belongs to the D-isomer specific 2-hydroxyacid dehydrogenase family. As to quaternary structure, homotetramer.

Catalyzes the stereospecific NAD(P)H-dependent reduction of 2-ketocarboxylic acids into the corresponding D-2-hydroxycarboxylic acids. Can use both NADPH or NADH as reductant, displaying a marked preference for NADPH over NADH. Shows a broad substrate specificity, although it displays a marked preference for the 2-ketocarboxylic acids having an unbranched chain of 4-5 carbon atoms. This Haloferax mediterranei (strain ATCC 33500 / DSM 1411 / JCM 8866 / NBRC 14739 / NCIMB 2177 / R-4) (Halobacterium mediterranei) protein is D-2-hydroxyacid dehydrogenase (ddh).